The primary structure comprises 501 residues: AKT kinase-transforming protein (501 aa).

In terms of domain architecture, PH spans 26-129 (AIVKEGWLHK…WATAIQTVAD (104 aa)). The segment at 135–158 (EEETMDFRSGSPSDNSGAEEMEVS) is disordered. The Protein kinase domain occupies 171-429 (FEYLKLLGKG…AKEIMQHRFF (259 aa)). ATP-binding positions include 177 to 185 (LGKGTFGKV) and K200. D295 acts as the Proton acceptor in catalysis. Y347 is modified (phosphotyrosine). Residues 430 to 501 (ANIVWQDVYE…QFSYSASGTA (72 aa)) enclose the AGC-kinase C-terminal domain. Residues 471 to 501 (TPPDQDDSMECVDSERRPHFPQFSYSASGTA) form a disordered region.

This sequence belongs to the protein kinase superfamily. AGC Ser/Thr protein kinase family. RAC subfamily. In terms of assembly, interacts with mouse THEM4. Post-translationally, autophosphorylated on threonine and serine residues.

The enzyme catalyses L-seryl-[protein] + ATP = O-phospho-L-seryl-[protein] + ADP + H(+). The catalysed reaction is L-threonyl-[protein] + ATP = O-phospho-L-threonyl-[protein] + ADP + H(+). The sequence is that of AKT kinase-transforming protein (V-AKT) from Mus musculus (Mouse).